Here is a 61-residue protein sequence, read N- to C-terminus: Small ribosomal subunit protein uS14 (61 aa).

Zn(2+) contacts are provided by Cys24, Cys27, Cys40, and Cys43.

It belongs to the universal ribosomal protein uS14 family. Zinc-binding uS14 subfamily. In terms of assembly, part of the 30S ribosomal subunit. Contacts proteins S3 and S10. Zn(2+) is required as a cofactor.

Functionally, binds 16S rRNA, required for the assembly of 30S particles and may also be responsible for determining the conformation of the 16S rRNA at the A site. The chain is Small ribosomal subunit protein uS14 from Bifidobacterium longum (strain DJO10A).